A 367-amino-acid chain; its full sequence is MAVIKIDTSQYDAQLSEKEQRIAAQFQRFGVDKLEVFSSEPINYRQRAEFRVWHDGDDLFHIMFDQQTKDKIRVDSFDPAAPLVGEVMQVMIDNLKSCEILRRKLFQIDYLSTLSGEILVSLLYHKPLDEHWLSEINTLKEKLSSKYKIDFIGRARKQKEMLGDDYVTERLNVNGQELIYQQVENSFTQPNAKVNIKMLEWAQDLCKPLKNDLLELYCGNGNFSIALAGSFNKVLATEISKSSVHSAQYNIAQNKVDNLDIIRMSSEEFTQAMNGERSFSRLEGIDLNSYNCQTILVDPPRAGMDTLTCDLVANYESIIYISCNPETLERDLDHLTRTHEVKRFAIFDQFPYTHHIESGVFLQKKNT.

Q189, Y217, N222, E238, and D298 together coordinate S-adenosyl-L-methionine. The active-site Nucleophile is C323. E357 (proton acceptor) is an active-site residue.

It belongs to the class I-like SAM-binding methyltransferase superfamily. RNA M5U methyltransferase family. TrmA subfamily.

It carries out the reaction uridine(54) in tRNA + S-adenosyl-L-methionine = 5-methyluridine(54) in tRNA + S-adenosyl-L-homocysteine + H(+). The catalysed reaction is uridine(341) in tmRNA + S-adenosyl-L-methionine = 5-methyluridine(341) in tmRNA + S-adenosyl-L-homocysteine + H(+). In terms of biological role, dual-specificity methyltransferase that catalyzes the formation of 5-methyluridine at position 54 (m5U54) in all tRNAs, and that of position 341 (m5U341) in tmRNA (transfer-mRNA). In Pseudoalteromonas translucida (strain TAC 125), this protein is tRNA/tmRNA (uracil-C(5))-methyltransferase.